The sequence spans 601 residues: Elongation factor 4 (601 aa).

A tr-type G domain is found at 5-187 (SNIRNFAIIA…AIVTKLPSPN (183 aa)). GTP contacts are provided by residues 17 to 22 (DHGKST) and 134 to 137 (NKID).

Belongs to the TRAFAC class translation factor GTPase superfamily. Classic translation factor GTPase family. LepA subfamily.

It is found in the cell inner membrane. It catalyses the reaction GTP + H2O = GDP + phosphate + H(+). Required for accurate and efficient protein synthesis under certain stress conditions. May act as a fidelity factor of the translation reaction, by catalyzing a one-codon backward translocation of tRNAs on improperly translocated ribosomes. Back-translocation proceeds from a post-translocation (POST) complex to a pre-translocation (PRE) complex, thus giving elongation factor G a second chance to translocate the tRNAs correctly. Binds to ribosomes in a GTP-dependent manner. In Orientia tsutsugamushi (strain Ikeda) (Rickettsia tsutsugamushi), this protein is Elongation factor 4.